A 798-amino-acid polypeptide reads, in one-letter code: Phenylalanine--tRNA ligase beta subunit (798 aa).

The region spanning 39–147 is the tRNA-binding domain; that stretch reads AARLAGFTLA…PSGEVGERFI (109 aa). Residues 404–475 form the B5 domain; sequence DHSRAYKLDA…RIASLTKLVG (72 aa). Mg(2+)-binding residues include aspartate 453, aspartate 459, glutamate 462, and glutamate 463. Positions 704–797 constitute an FDX-ACB domain; that stretch reads RDLQAVERDF…VAKATGGTLR (94 aa).

Belongs to the phenylalanyl-tRNA synthetase beta subunit family. Type 1 subfamily. Tetramer of two alpha and two beta subunits. Mg(2+) is required as a cofactor.

Its subcellular location is the cytoplasm. The catalysed reaction is tRNA(Phe) + L-phenylalanine + ATP = L-phenylalanyl-tRNA(Phe) + AMP + diphosphate + H(+). The chain is Phenylalanine--tRNA ligase beta subunit from Ruegeria pomeroyi (strain ATCC 700808 / DSM 15171 / DSS-3) (Silicibacter pomeroyi).